Consider the following 221-residue polypeptide: Lipoprotein-releasing system ATP-binding protein LolD (221 aa).

Residues 6–220 (LILKKISKHY…YNLKNGLLNI (215 aa)) enclose the ABC transporter domain. Position 42–49 (42–49 (GSSGSGKS)) interacts with ATP.

It belongs to the ABC transporter superfamily. Lipoprotein translocase (TC 3.A.1.125) family. As to quaternary structure, the complex is composed of two ATP-binding proteins (LolD) and two transmembrane proteins (LolC and LolE).

It localises to the cell inner membrane. Functionally, part of the ABC transporter complex LolCDE involved in the translocation of mature outer membrane-directed lipoproteins, from the inner membrane to the periplasmic chaperone, LolA. Responsible for the formation of the LolA-lipoprotein complex in an ATP-dependent manner. This chain is Lipoprotein-releasing system ATP-binding protein LolD, found in Rickettsia typhi (strain ATCC VR-144 / Wilmington).